A 290-amino-acid polypeptide reads, in one-letter code: Arylamine N-acetyltransferase, pineal gland isozyme NAT-3 (290 aa).

Cys-68 serves as the catalytic Acyl-thioester intermediate. Residues His-107 and Asp-122 contribute to the active site.

Belongs to the arylamine N-acetyltransferase family.

The enzyme catalyses an arylamine + acetyl-CoA = an N-acetylarylamine + CoA. It catalyses the reaction an N-hydroxyarylamine + acetyl-CoA = an N-acetoxyarylamine + CoA. Functionally, catalyzes the N- or O-acetylation of various arylamine and heterocyclic amine substrates, and participates in the detoxification of a plethora of hydrazine and arylamine drugs. In Gallus gallus (Chicken), this protein is Arylamine N-acetyltransferase, pineal gland isozyme NAT-3.